The following is a 555-amino-acid chain: Hydroxylamine reductase (555 aa).

[4Fe-4S] cluster contacts are provided by cysteine 5, cysteine 8, cysteine 17, and cysteine 23. Hybrid [4Fe-2O-2S] cluster-binding residues include histidine 248, glutamate 272, cysteine 316, cysteine 408, cysteine 436, cysteine 461, glutamate 496, and lysine 498. Cysteine 408 is modified (cysteine persulfide).

This sequence belongs to the HCP family. [4Fe-4S] cluster is required as a cofactor. It depends on hybrid [4Fe-2O-2S] cluster as a cofactor.

Its subcellular location is the cytoplasm. The catalysed reaction is A + NH4(+) + H2O = hydroxylamine + AH2 + H(+). Its function is as follows. Catalyzes the reduction of hydroxylamine to form NH(3) and H(2)O. The protein is Hydroxylamine reductase of Halothermothrix orenii (strain H 168 / OCM 544 / DSM 9562).